We begin with the raw amino-acid sequence, 169 residues long: Peptide methionine sulfoxide reductase MsrA (169 aa).

Cys10 is a catalytic residue.

Belongs to the MsrA Met sulfoxide reductase family.

The catalysed reaction is L-methionyl-[protein] + [thioredoxin]-disulfide + H2O = L-methionyl-(S)-S-oxide-[protein] + [thioredoxin]-dithiol. It carries out the reaction [thioredoxin]-disulfide + L-methionine + H2O = L-methionine (S)-S-oxide + [thioredoxin]-dithiol. Functionally, has an important function as a repair enzyme for proteins that have been inactivated by oxidation. Catalyzes the reversible oxidation-reduction of methionine sulfoxide in proteins to methionine. This chain is Peptide methionine sulfoxide reductase MsrA, found in Streptococcus equi subsp. zooepidemicus (strain MGCS10565).